We begin with the raw amino-acid sequence, 128 residues long: MRIALIAHDRKKDDLVNFVDEHKELFAGHRLVATGTTGKRIMERTGLKVHRLMSGPLGGDQQMGSLVARGRLDLVIFLRDPLTPQPHEPDINALLRICDVHNVPAATNLATAAIFLRYMQDHPGNRQA.

An MGS-like domain is found at 1–128; it reads MRIALIAHDR…MQDHPGNRQA (128 aa). Substrate is bound by residues His8, Lys12, 34–37, and 54–55; these read TGTT and SG. Asp60 (proton donor/acceptor) is an active-site residue. His87 is a substrate binding site.

This sequence belongs to the methylglyoxal synthase family.

The enzyme catalyses dihydroxyacetone phosphate = methylglyoxal + phosphate. Functionally, catalyzes the formation of methylglyoxal from dihydroxyacetone phosphate. The chain is Methylglyoxal synthase from Moorella thermoacetica (strain ATCC 39073 / JCM 9320).